The chain runs to 345 residues: UDP-N-acetylenolpyruvoylglucosamine reductase (345 aa).

The FAD-binding PCMH-type domain occupies 59–254 (VGGPAACLAR…RKATQPLGRP (196 aa)). The active site involves arginine 209. Cysteine 258 (proton donor) is an active-site residue. Glutamate 328 is a catalytic residue.

Belongs to the MurB family. FAD is required as a cofactor.

It is found in the cytoplasm. It catalyses the reaction UDP-N-acetyl-alpha-D-muramate + NADP(+) = UDP-N-acetyl-3-O-(1-carboxyvinyl)-alpha-D-glucosamine + NADPH + H(+). Its pathway is cell wall biogenesis; peptidoglycan biosynthesis. In terms of biological role, cell wall formation. The chain is UDP-N-acetylenolpyruvoylglucosamine reductase from Syntrophobacter fumaroxidans (strain DSM 10017 / MPOB).